Here is an 818-residue protein sequence, read N- to C-terminus: MAEEAADVDIDIEGDINESSKSIYDSLNTGFAPEHYIESAWQNEEGLAPWALDSSISEENREAIKKMLLEEEYYLSNKPLAVKFWSDSQEGEKQCIKRVRSPAKASSSPVKWTKEEKNLFEQGLATFGRRWTSIARLIGSRSVLQVKNYARHYFKNKCKLEGFVKEEAKIGSLQIPNLQDYENEPDITDEPTTFRGRADPNLNAIKIEKLSDDEEIDITDEVDELLSNKTNLDTIIIAKTDKVKETKVETEVQQKSHSTTEHSQTDIPKLVLQQTETECLDSVNPLTCITSPKWTLSPQQCEEDDYDQPDVQDCLQEKCLSPHAEDLTVLCENENDSQDEDDEIKPPDQELEIDRNFILDEEKQAIPEFFEGRQAKTPDRYLRIRNYILDQWENCKPKYLNKTSVRPGLKNCGDVNCIGRIHTYLELIGAINFGCEQAIYNRPRPVDKTKCKEGKDTLEAYKLAHRLQSMRTRKRRVRDPWGNWCDAKDLEGQTYEHLSAEELARRHEDKIKSYKYSKGTRQVRSSFDPFQLIPCSAFSEEKKAPFQVKVSCEAMLVLDLHAHVSMAEVIGLLGGRYTESESVVEICAVEPCNSLSTGLQCEMDPVSQTQASEALASRGYSVIGWYHSHPAFDPNPSIRDIDTQAKYQNYFSRGGAKFLGMIISPYNRRNPHPQSQVACLIISDELSNDGSYRIPYKFEIEYMQGEPQWELVFAKTRWIIEKYRSSHSSVSMDKRFRHDSELTCLQKLLMCMKKTLGNTACPLITEEFLHRIEEYFRTSYKKESNYQIEDNDPCKQHSDTTFTMDSFQDYEPNGRPSL.

The SANT domain maps to 107–158 (SSPVKWTKEEKNLFEQGLATFGRRWTSIARLIGSRSVLQVKNYARHYFKNKC). In terms of domain architecture, SWIRM spans 344–442 (IKPPDQELEI…FGCEQAIYNR (99 aa)). Residues 548-680 (VKVSCEAMLV…PHPQSQVACL (133 aa)) form the MPN domain. H627, H629, and D640 together coordinate Zn(2+). The short motif at 627–640 (HSHPAFDPNPSIRD) is the JAMM motif element. Positions 745–749 (LQKLL) match the LXXLL motif motif.

This sequence belongs to the peptidase M67A family. MYSM1 subfamily.

It is found in the nucleus. Its function is as follows. Metalloprotease that specifically deubiquitinates monoubiquitinated histone H2A, a specific tag for epigenetic transcriptional repression, thereby acting as a coactivator. Preferentially deubiquitinates monoubiquitinated H2A in hyperacetylated nucleosomes. Deubiquitination of histone H2A leads to facilitate the phosphorylation and dissociation of histone H1 from the nucleosome. Acts as a coactivator by participating in the initiation and elongation steps of androgen receptor (AR)-induced gene activation. The chain is Histone H2A deubiquitinase MYSM1 (mysm1) from Xenopus laevis (African clawed frog).